We begin with the raw amino-acid sequence, 384 residues long: uncharacterized protein (384 aa).

Disordered regions lie at residues 133–257 (RQNS…TNQD) and 297–368 (ERTP…STAT). Low complexity predominate over residues 143-157 (PSTSSEPEPQPSTSS). The span at 302 to 315 (DQTDITDDSADWSE) shows a compositional bias: acidic residues. The segment covering 316-342 (GETRRPSHSEVGERRLSRENNSEDPNR) has biased composition (basic and acidic residues). A compositionally biased stretch (basic residues) spans 343–363 (SRSRSRSRERRRRRPRVRPGR).

This is an uncharacterized protein from Gallid herpesvirus 2 (strain Chicken/Md5/ATCC VR-987) (GaHV-2).